Here is a 186-residue protein sequence, read N- to C-terminus: Adrenodoxin, mitochondrial (186 aa).

The N-terminal 58 residues, 1–58 (MAVRLLRVASAALGDTAVRWQPLVGPRAGNRGPGGSIWLGLGGRAAAARTLSLSARAW), are a transit peptide targeting the mitochondrion. Residue serine 61 is modified to Phosphoserine. The residue at position 64 (lysine 64) is an N6-acetyllysine; alternate. Lysine 64 carries the post-translational modification N6-succinyllysine; alternate. Residues 65–169 (ITVHFINRDG…NMTVRVPEAV (105 aa)) form the 2Fe-2S ferredoxin-type domain. 4 residues coordinate [2Fe-2S] cluster: cysteine 104, cysteine 110, cysteine 113, and cysteine 150. An N6-succinyllysine modification is found at lysine 156. Position 175 is a phosphoserine (serine 175).

The protein belongs to the adrenodoxin/putidaredoxin family. Interacts with CYP11A1. It depends on [2Fe-2S] cluster as a cofactor.

It is found in the mitochondrion matrix. In terms of biological role, essential for the synthesis of various steroid hormones. Participates in the reduction of mitochondrial cytochrome P450 for steroidogenesis. Transfers electrons from adrenodoxin reductase to CYP11A1, a cytochrome P450 that catalyzes cholesterol side-chain cleavage. Does not form a ternary complex with adrenodoxin reductase and CYP11A1 but shuttles between the two enzymes to transfer electrons. In Sus scrofa (Pig), this protein is Adrenodoxin, mitochondrial (FDX1).